The following is a 565-amino-acid chain: Proline--tRNA ligase (565 aa).

Belongs to the class-II aminoacyl-tRNA synthetase family. ProS type 1 subfamily. As to quaternary structure, homodimer.

The protein localises to the cytoplasm. The enzyme catalyses tRNA(Pro) + L-proline + ATP = L-prolyl-tRNA(Pro) + AMP + diphosphate. In terms of biological role, catalyzes the attachment of proline to tRNA(Pro) in a two-step reaction: proline is first activated by ATP to form Pro-AMP and then transferred to the acceptor end of tRNA(Pro). As ProRS can inadvertently accommodate and process non-cognate amino acids such as alanine and cysteine, to avoid such errors it has two additional distinct editing activities against alanine. One activity is designated as 'pretransfer' editing and involves the tRNA(Pro)-independent hydrolysis of activated Ala-AMP. The other activity is designated 'posttransfer' editing and involves deacylation of mischarged Ala-tRNA(Pro). The misacylated Cys-tRNA(Pro) is not edited by ProRS. The chain is Proline--tRNA ligase from Lactobacillus johnsonii (strain CNCM I-12250 / La1 / NCC 533).